The following is a 548-amino-acid chain: Chaperonin GroEL (548 aa).

ATP contacts are provided by residues 30–33 (TLGP), lysine 51, 87–91 (DGTTT), glycine 415, 478–480 (NAA), and aspartate 494.

The protein belongs to the chaperonin (HSP60) family. As to quaternary structure, forms a cylinder of 14 subunits composed of two heptameric rings stacked back-to-back. Interacts with the co-chaperonin GroES.

The protein localises to the cytoplasm. The enzyme catalyses ATP + H2O + a folded polypeptide = ADP + phosphate + an unfolded polypeptide.. Its function is as follows. Together with its co-chaperonin GroES, plays an essential role in assisting protein folding. The GroEL-GroES system forms a nano-cage that allows encapsulation of the non-native substrate proteins and provides a physical environment optimized to promote and accelerate protein folding. This Trichlorobacter lovleyi (strain ATCC BAA-1151 / DSM 17278 / SZ) (Geobacter lovleyi) protein is Chaperonin GroEL.